Consider the following 524-residue polypeptide: GMP synthase [glutamine-hydrolyzing] (524 aa).

Residues 9–207 (RILILDFSSQ…VIHICQCIPN (199 aa)) form the Glutamine amidotransferase type-1 domain. Catalysis depends on Cys86, which acts as the Nucleophile. Residues His181 and Glu183 contribute to the active site. The region spanning 208–399 (WTTKHIIEDS…LGLPADLIYR (192 aa)) is the GMPS ATP-PPase domain. Position 235 to 241 (235 to 241 (SGGVDSA)) interacts with ATP.

Homodimer.

It carries out the reaction XMP + L-glutamine + ATP + H2O = GMP + L-glutamate + AMP + diphosphate + 2 H(+). It functions in the pathway purine metabolism; GMP biosynthesis; GMP from XMP (L-Gln route): step 1/1. Catalyzes the synthesis of GMP from XMP. The chain is GMP synthase [glutamine-hydrolyzing] from Coxiella burnetii (strain Dugway 5J108-111).